The sequence spans 437 residues: GTPase Obg (437 aa).

In terms of domain architecture, Obg spans 2–160; that stretch reads SMFLDTAKIS…RQLELELKIL (159 aa). One can recognise an OBG-type G domain in the interval 161 to 338; that stretch reads ADVGLVGFPS…LLEATAELLA (178 aa). Residues 167–174, 192–196, 214–217, 284–287, and 319–321 each bind GTP; these read GFPSVGKS, FTTIV, DLPG, NKMD, and SSL. Mg(2+)-binding residues include Ser174 and Thr194. The region spanning 359–437 is the OCT domain; the sequence is GFAEAEKDFE…IGKFEFEFVD (79 aa).

The protein belongs to the TRAFAC class OBG-HflX-like GTPase superfamily. OBG GTPase family. In terms of assembly, monomer. Requires Mg(2+) as cofactor.

It is found in the cytoplasm. An essential GTPase which binds GTP, GDP and possibly (p)ppGpp with moderate affinity, with high nucleotide exchange rates and a fairly low GTP hydrolysis rate. Plays a role in control of the cell cycle, stress response, ribosome biogenesis and in those bacteria that undergo differentiation, in morphogenesis control. The polypeptide is GTPase Obg (Streptococcus pyogenes serotype M18 (strain MGAS8232)).